Here is an 86-residue protein sequence, read N- to C-terminus: Small ribosomal subunit protein uS15 (86 aa).

The protein belongs to the universal ribosomal protein uS15 family. As to quaternary structure, part of the 30S ribosomal subunit. Forms a bridge to the 50S subunit in the 70S ribosome, contacting the 23S rRNA.

Functionally, one of the primary rRNA binding proteins, it binds directly to 16S rRNA where it helps nucleate assembly of the platform of the 30S subunit by binding and bridging several RNA helices of the 16S rRNA. Its function is as follows. Forms an intersubunit bridge (bridge B4) with the 23S rRNA of the 50S subunit in the ribosome. The sequence is that of Small ribosomal subunit protein uS15 from Mycoplasma pneumoniae (strain ATCC 29342 / M129 / Subtype 1) (Mycoplasmoides pneumoniae).